A 174-amino-acid chain; its full sequence is ATP-dependent protease subunit HslV (174 aa).

The active site involves threonine 2. Residues glycine 157, cysteine 160, and threonine 163 each coordinate Na(+).

This sequence belongs to the peptidase T1B family. HslV subfamily. A double ring-shaped homohexamer of HslV is capped on each side by a ring-shaped HslU homohexamer. The assembly of the HslU/HslV complex is dependent on binding of ATP.

It localises to the cytoplasm. It carries out the reaction ATP-dependent cleavage of peptide bonds with broad specificity.. Allosterically activated by HslU binding. Protease subunit of a proteasome-like degradation complex believed to be a general protein degrading machinery. The sequence is that of ATP-dependent protease subunit HslV from Shewanella loihica (strain ATCC BAA-1088 / PV-4).